A 506-amino-acid polypeptide reads, in one-letter code: Histidine ammonia-lyase (506 aa).

Residues 142–144 constitute a cross-link (5-imidazolinone (Ala-Gly)); sequence ASG. Residue Ser143 is modified to 2,3-didehydroalanine (Ser).

The protein belongs to the PAL/histidase family. Contains an active site 4-methylidene-imidazol-5-one (MIO), which is formed autocatalytically by cyclization and dehydration of residues Ala-Ser-Gly.

The protein resides in the cytoplasm. The enzyme catalyses L-histidine = trans-urocanate + NH4(+). The protein operates within amino-acid degradation; L-histidine degradation into L-glutamate; N-formimidoyl-L-glutamate from L-histidine: step 1/3. This Bacillus cereus (strain ATCC 14579 / DSM 31 / CCUG 7414 / JCM 2152 / NBRC 15305 / NCIMB 9373 / NCTC 2599 / NRRL B-3711) protein is Histidine ammonia-lyase.